The chain runs to 148 residues: MLIVYFSSATDNTHRFVQKLDLPNVRIPLTRVEEPLKINEPYVLITPTYGGGVSMTGENSRPVPPQVIRFLNDEHNRSFIRAVVAGGNSNFGSDFGLAGEIISKKCKVPYVYRFELMGNEEDVSILRGGLTQNAQALGLEPQEPVTSR.

The protein belongs to the NrdI family.

Probably involved in ribonucleotide reductase function. This is Protein NrdI from Corynebacterium glutamicum (strain R).